Here is a 115-residue protein sequence, read N- to C-terminus: uncharacterized protein (115 aa).

In terms of domain architecture, MSP spans M1 to E115.

This is an uncharacterized protein from Caenorhabditis elegans.